The primary structure comprises 267 residues: 4-hydroxy-tetrahydrodipicolinate reductase (267 aa).

10 to 15 (GAGGKM) is an NAD(+) binding site. Residue Arg-38 coordinates NADP(+). NAD(+) contacts are provided by residues 100–102 (GTT) and 126–129 (APNF). The Proton donor/acceptor role is filled by His-156. His-157 is a binding site for (S)-2,3,4,5-tetrahydrodipicolinate. Lys-160 acts as the Proton donor in catalysis. 166–167 (GT) is a binding site for (S)-2,3,4,5-tetrahydrodipicolinate.

Belongs to the DapB family.

It is found in the cytoplasm. It carries out the reaction (S)-2,3,4,5-tetrahydrodipicolinate + NAD(+) + H2O = (2S,4S)-4-hydroxy-2,3,4,5-tetrahydrodipicolinate + NADH + H(+). The catalysed reaction is (S)-2,3,4,5-tetrahydrodipicolinate + NADP(+) + H2O = (2S,4S)-4-hydroxy-2,3,4,5-tetrahydrodipicolinate + NADPH + H(+). Its pathway is amino-acid biosynthesis; L-lysine biosynthesis via DAP pathway; (S)-tetrahydrodipicolinate from L-aspartate: step 4/4. In terms of biological role, catalyzes the conversion of 4-hydroxy-tetrahydrodipicolinate (HTPA) to tetrahydrodipicolinate. This chain is 4-hydroxy-tetrahydrodipicolinate reductase, found in Desulfitobacterium hafniense (strain DSM 10664 / DCB-2).